A 290-amino-acid polypeptide reads, in one-letter code: MEWSLTQNKLLAFHRLMRTDKPIGALLLLWPTLWALWVATPGVPPLWILAVFVAGVWLMRAAGCVVNDYADRKFDGHVKRTANRPLPSGAVTEKEARTLFVVLVLLAFLLVLTLNTMTILLSVAALALAWVYPFMKRYTHLPQVVLGAAFGWSIPMAFAAVSESVPLSCWLMFLANILWAVAYDTQYAMVDRDDDVKIGIKSTAILFGQYDKFIIGVLQIGVMVLMALIGWLNGLDWGYYWSILVAGGLFVYQQKLIANREREACFKAFMNNNYVGLVLFLGLAMSYWHF.

7 consecutive transmembrane segments (helical) span residues 33–53 (LWAL…AVFV), 99–119 (LFVV…TMTI), 141–161 (LPQV…FAAV), 163–183 (ESVP…AVAY), 213–233 (FIIG…GWLN), 237–257 (WGYY…QKLI), and 268–288 (AFMN…MSYW).

The protein belongs to the UbiA prenyltransferase family. Requires Mg(2+) as cofactor.

Its subcellular location is the cell inner membrane. The enzyme catalyses all-trans-octaprenyl diphosphate + 4-hydroxybenzoate = 4-hydroxy-3-(all-trans-octaprenyl)benzoate + diphosphate. The protein operates within cofactor biosynthesis; ubiquinone biosynthesis. Functionally, catalyzes the prenylation of para-hydroxybenzoate (PHB) with an all-trans polyprenyl group. Mediates the second step in the final reaction sequence of ubiquinone-8 (UQ-8) biosynthesis, which is the condensation of the polyisoprenoid side chain with PHB, generating the first membrane-bound Q intermediate 3-octaprenyl-4-hydroxybenzoate. The protein is 4-hydroxybenzoate octaprenyltransferase of Escherichia fergusonii (strain ATCC 35469 / DSM 13698 / CCUG 18766 / IAM 14443 / JCM 21226 / LMG 7866 / NBRC 102419 / NCTC 12128 / CDC 0568-73).